The primary structure comprises 21 residues: Hemocyanin subunit 1 (21 aa).

Belongs to the tyrosinase family. Hemocyanin subfamily. Hemolymph.

The protein resides in the secreted. It is found in the extracellular space. Hemocyanins are copper-containing oxygen carriers occurring freely dissolved in the hemolymph of many mollusks and arthropods. The polypeptide is Hemocyanin subunit 1 (Maja squinado (Mediterranean spider crab)).